The following is a 49-amino-acid chain: Metallothionein (49 aa).

The beta stretch occupies residues 1–16 (SCAGSCKCKNCRCRSC). Residues Cys2, Cys6, Cys8, Cys11, Cys13, Cys16, Cys20, Cys21, Cys23, Cys24, Cys28, Cys31, Cys35, Cys37, Cys45, Cys47, and Cys48 each contribute to the a divalent metal cation site. The interval 17–49 (RKSCCSCCPAGCNNCAKGCVCKEPASSKCSCCH) is alpha.

The protein belongs to the metallothionein superfamily. Type 1 family.

Functionally, metallothioneins have a high content of cysteine residues that bind various heavy metals. The sequence is that of Metallothionein from Phasianus colchicus colchicus (Black-necked pheasant).